A 41-amino-acid chain; its full sequence is Large ribosomal subunit protein bL36 (41 aa).

The protein belongs to the bacterial ribosomal protein bL36 family.

This chain is Large ribosomal subunit protein bL36, found in Rickettsia massiliae (strain Mtu5).